The chain runs to 551 residues: Hydroxylamine reductase (551 aa).

4 residues coordinate [2Fe-2S] cluster: cysteine 3, cysteine 6, cysteine 18, and cysteine 25. Positions 249, 273, 317, 405, 433, 459, 493, and 495 each coordinate hybrid [4Fe-2O-2S] cluster. Cysteine persulfide is present on cysteine 405.

Belongs to the HCP family. It depends on [2Fe-2S] cluster as a cofactor. Hybrid [4Fe-2O-2S] cluster is required as a cofactor.

The protein resides in the cytoplasm. It carries out the reaction A + NH4(+) + H2O = hydroxylamine + AH2 + H(+). Its function is as follows. Catalyzes the reduction of hydroxylamine to form NH(3) and H(2)O. The protein is Hydroxylamine reductase of Actinobacillus pleuropneumoniae serotype 5b (strain L20).